We begin with the raw amino-acid sequence, 115 residues long: Migration and invasion enhancer 1 (115 aa).

Positions 1 to 10 (MSGDTGTTSV) are enriched in polar residues. Positions 1-22 (MSGDTGTTSVAPPPGETEPGHG) are disordered. Position 2 is an N-acetylserine (serine 2). Cysteine 30 and cysteine 33 are disulfide-bonded. Cysteine 112 is lipidated: S-geranylgeranyl cysteine. A propeptide spans 113-115 (VIL) (removed in mature form).

The protein belongs to the SelWTH family. In terms of assembly, interacts with GPX1. Isoprenylation facilitates association with the plasma membrane and enhances the migratory phenotype of cells by inducing increased filopodia formation.

The protein localises to the cytoplasm. Its subcellular location is the cytosol. The protein resides in the cell membrane. Increases cell migration by inducing filopodia formation at the leading edge of migrating cells. Plays a role in regulation of apoptosis, possibly through control of CASP3. May be involved in a redox-related process. The protein is Migration and invasion enhancer 1 (MIEN1) of Bos taurus (Bovine).